Consider the following 303-residue polypeptide: 1-acyl-sn-glycerol-3-phosphate acyltransferase (303 aa).

An HXXXXD motif motif is present at residues 82–87 (HQSTLD). The segment at 278-303 (NEPVPSVSISNDVNTHNEGSSVKKMH) is disordered. Over residues 284 to 297 (VSISNDVNTHNEGS) the composition is skewed to polar residues.

The protein belongs to the 1-acyl-sn-glycerol-3-phosphate acyltransferase family.

The protein localises to the lipid droplet. It catalyses the reaction a 1-acyl-sn-glycero-3-phosphate + an acyl-CoA = a 1,2-diacyl-sn-glycero-3-phosphate + CoA. The enzyme catalyses a 1-acyl-sn-glycero-3-phosphocholine + an acyl-CoA = a 1,2-diacyl-sn-glycero-3-phosphocholine + CoA. The catalysed reaction is a 1-acyl-sn-glycero-3-phosphoethanolamine + an acyl-CoA = a 1,2-diacyl-sn-glycero-3-phosphoethanolamine + CoA. It carries out the reaction 1-hexadecanoyl-sn-glycero-3-phosphate + (9Z)-octadecenoyl-CoA = 1-hexadecanoyl-2-(9Z-octadecenoyl)-sn-glycero-3-phosphate + CoA. It catalyses the reaction 1-octadecanoyl-sn-glycero-3-phosphate + (9Z)-octadecenoyl-CoA = 1-octadecanoyl-2-(9Z-octadecenoyl)-sn-glycero-3-phosphate + CoA. The enzyme catalyses 1-(9Z-octadecenoyl)-sn-glycero-3-phospho-L-serine + (9Z)-octadecenoyl-CoA = 1,2-di-(9Z)-octadecenoyl-sn-glycero-3-phospho-L-serine + CoA. The catalysed reaction is a 1-acyl-sn-glycero-3-phospho-(1D-myo-inositol) + (9Z)-octadecenoyl-CoA = a 1-acyl-2-(9Z-octadecenoyl)-sn-glycero-3-phospho-(1D-myo-inositol) + CoA. It carries out the reaction 1-heptadecanoyl-sn-glycero-3-phosphate + (9Z)-octadecenoyl-CoA = 1-heptadecanoyl-2-(9Z)-octadecenoyl-sn-glycero-3-phosphate + CoA. It catalyses the reaction 1-heptadecanoyl-sn-glycero-3-phosphate + dodecanoyl-CoA = 1-heptadecanoyl-2-dodecanoyl-sn-glycero-3-phosphate + CoA. The enzyme catalyses 1-heptadecanoyl-sn-glycero-3-phosphate + tetradecanoyl-CoA = 1-heptadecanoyl-2-tetradecanoyl-sn-glycero-3-phosphate + CoA. It functions in the pathway phospholipid metabolism; CDP-diacylglycerol biosynthesis; CDP-diacylglycerol from sn-glycerol 3-phosphate: step 2/3. Functionally, acyltransferase that catalyzes the sn-2-specific, acyl-CoA-dependent acylation of lysophosphatidic acid (LPA) to phosphatidic acid (PA) in lipid particles. Together with ALE1, plays a central role in PA biosynthesis. PA is the intermediate, from which all glycerophospholipids are synthesized. Can also acylate lysophosphoinositol (LPI) and lysophosphoserine (LPS). The fatty acyl substrates include 18:1-acyl-CoA, 14:0-acyl-CoA, 12:0-acyl-CoA and 10:0-acyl-CoA. This is 1-acyl-sn-glycerol-3-phosphate acyltransferase from Saccharomyces cerevisiae (strain ATCC 204508 / S288c) (Baker's yeast).